We begin with the raw amino-acid sequence, 97 residues long: Small ribosomal subunit protein bS6 (97 aa).

This sequence belongs to the bacterial ribosomal protein bS6 family.

Functionally, binds together with bS18 to 16S ribosomal RNA. This is Small ribosomal subunit protein bS6 from Dictyoglomus turgidum (strain DSM 6724 / Z-1310).